Reading from the N-terminus, the 363-residue chain is Dihydroorotate dehydrogenase (quinone) (363 aa).

Residues 62 to 66 and threonine 86 contribute to the FMN site; that span reads AGFDK. Lysine 66 contributes to the substrate binding site. Substrate is bound at residue 111–115; the sequence is NRMGF. Positions 142 and 175 each coordinate FMN. Residue asparagine 175 participates in substrate binding. Catalysis depends on serine 178, which acts as the Nucleophile. A substrate-binding site is contributed by asparagine 180. 2 residues coordinate FMN: lysine 216 and threonine 244. 245 to 246 lines the substrate pocket; sequence NT. FMN is bound by residues glycine 267, glycine 296, and 317–318; that span reads YT.

Belongs to the dihydroorotate dehydrogenase family. Type 2 subfamily. As to quaternary structure, monomer. Requires FMN as cofactor.

It is found in the cell membrane. It catalyses the reaction (S)-dihydroorotate + a quinone = orotate + a quinol. It participates in pyrimidine metabolism; UMP biosynthesis via de novo pathway; orotate from (S)-dihydroorotate (quinone route): step 1/1. Catalyzes the conversion of dihydroorotate to orotate with quinone as electron acceptor. The sequence is that of Dihydroorotate dehydrogenase (quinone) from Anaeromyxobacter sp. (strain Fw109-5).